We begin with the raw amino-acid sequence, 321 residues long: Ubiquitin carboxyl-terminal hydrolase ubh-4 (321 aa).

The region spanning 6 to 220 (SWCLIESDPG…ITFNLMALVP (215 aa)) is the UCH catalytic domain. Cysteine 83 serves as the catalytic Nucleophile. Histidine 158 (proton donor) is an active-site residue. A ULD domain is found at 273–301 (NYTPFVIELMKILAKEGKLVGLVDNAYQA).

This sequence belongs to the peptidase C12 family. In terms of assembly, interacts with proteasome 19S subunit rpn-13. In terms of tissue distribution, highly expressed in intestine and to a lesser extent in other tissues including muscles and neurons.

The catalysed reaction is Thiol-dependent hydrolysis of ester, thioester, amide, peptide and isopeptide bonds formed by the C-terminal Gly of ubiquitin (a 76-residue protein attached to proteins as an intracellular targeting signal).. Functionally, ubiquitin-protein hydrolase involved both in the processing of ubiquitin precursors and of ubiquitinated proteins. This enzyme is a thiol protease that recognizes and hydrolyzes a peptide bond at the C-terminal glycine of ubiquitin. The chain is Ubiquitin carboxyl-terminal hydrolase ubh-4 from Caenorhabditis elegans.